Here is a 352-residue protein sequence, read N- to C-terminus: Photosystem II D2 protein (352 aa).

A helical transmembrane segment spans residues 40 to 60; the sequence is CAYLALGGWLTGTSFVTSWYT. His-117 contributes to the chlorophyll a binding site. Residues 124-140 traverse the membrane as a helical segment; sequence GFMLRQFEIARLVGVRP. Pheophytin a is bound by residues Gln-129 and Asn-142. Residues 152–165 form a helical membrane-spanning segment; the sequence is VFVSVFLMYPLGQS. His-197 is a binding site for chlorophyll a. Residues 207–227 form a helical membrane-spanning segment; it reads GALLCAIHGATVENTLFEDSE. Positions 214 and 261 each coordinate a plastoquinone. Fe cation is bound at residue His-214. His-268 is a binding site for Fe cation. The chain crosses the membrane as a helical span at residues 278–294; it reads GLWMSSIGIVGLALNLR.

This sequence belongs to the reaction center PufL/M/PsbA/D family. PSII is composed of 1 copy each of membrane proteins PsbA, PsbB, PsbC, PsbD, PsbE, PsbF, PsbH, PsbI, PsbJ, PsbK, PsbL, PsbM, PsbT, PsbX, PsbY, PsbZ, Psb30/Ycf12, peripheral proteins PsbO, CyanoQ (PsbQ), PsbU, PsbV and a large number of cofactors. It forms dimeric complexes. It depends on The D1/D2 heterodimer binds P680, chlorophylls that are the primary electron donor of PSII, and subsequent electron acceptors. It shares a non-heme iron and each subunit binds pheophytin, quinone, additional chlorophylls, carotenoids and lipids. There is also a Cl(-1) ion associated with D1 and D2, which is required for oxygen evolution. The PSII complex binds additional chlorophylls, carotenoids and specific lipids. as a cofactor.

The protein resides in the cellular thylakoid membrane. It catalyses the reaction 2 a plastoquinone + 4 hnu + 2 H2O = 2 a plastoquinol + O2. Photosystem II (PSII) is a light-driven water:plastoquinone oxidoreductase that uses light energy to abstract electrons from H(2)O, generating O(2) and a proton gradient subsequently used for ATP formation. It consists of a core antenna complex that captures photons, and an electron transfer chain that converts photonic excitation into a charge separation. The D1/D2 (PsbA/PsbD) reaction center heterodimer binds P680, the primary electron donor of PSII as well as several subsequent electron acceptors. D2 is needed for assembly of a stable PSII complex. This is Photosystem II D2 protein from Synechococcus elongatus (strain ATCC 33912 / PCC 7942 / FACHB-805) (Anacystis nidulans R2).